The primary structure comprises 167 residues: MPFSVTKFSLIFVALLLAEALVAQSSQLESVTRKPKPFFLVKKSMLVGMSETTEEVCQTVVLHNYEPVYGHLINGSLVEILQASGHKFSKTHVQCLEEDRPSCHGVKDDMYISECVTVYENANTMVRLFNSFGPYRLGTIRIPILCECRLRRQYRDFERPGDDDDDV.

The signal sequence occupies residues 1-25 (MPFSVTKFSLIFVALLLAEALVAQS).

This is an uncharacterized protein from Caenorhabditis elegans.